The chain runs to 214 residues: Outer-membrane lipoprotein LolB (214 aa).

Residues 1-25 form the signal peptide; sequence MNNLKRFTKSIFSCIALSGLLFLGG. Cysteine 26 carries the N-palmitoyl cysteine lipid modification. Cysteine 26 is lipidated: S-diacylglycerol cysteine.

It belongs to the LolB family. Monomer.

It is found in the cell outer membrane. Functionally, plays a critical role in the incorporation of lipoproteins in the outer membrane after they are released by the LolA protein. In Shewanella sp. (strain MR-7), this protein is Outer-membrane lipoprotein LolB.